Consider the following 161-residue polypeptide: V-type proton ATPase 16 kDa proteolipid subunit c (161 aa).

At 1 to 15 (MSYDLATAERAAYAP) the chain is on the lumenal side. The chain crosses the membrane as a helical span at residues 16 to 36 (FFGYMGAASAQIFTVLGAAYG). Topologically, residues 37 to 58 (TAKSAVGISSMGVMRPELIMKS) are cytoplasmic. The chain crosses the membrane as a helical span at residues 59–79 (VIPVIMAGIIGIYGLVVAMVL). Over 80–98 (RGKVTSASAGYTLDKGFAH) the chain is Lumenal. The chain crosses the membrane as a helical span at residues 99–119 (LAAGLTCGLCGLGAGYAIGIV). Over 120–137 (GDAGVRGTAQQPRLFVGM) the chain is Cytoplasmic. A helical membrane pass occupies residues 138-158 (ILILIFSEVLGLYGMIVALIL). At 159-161 (GTS) the chain is on the lumenal side.

The protein belongs to the V-ATPase proteolipid subunit family. V-ATPase is a heteromultimeric enzyme made up of two complexes: the ATP-hydrolytic V1 complex and the proton translocation V0 complex. The V1 complex consists of three catalytic AB heterodimers that form a heterohexamer, three peripheral stalks each consisting of EG heterodimers, one central rotor including subunits D and F, and the regulatory subunits C and H. The proton translocation complex V0 consists of the proton transport subunit a, a ring of proteolipid subunits c9c'', rotary subunit d, subunits e and f, and the accessory subunits vah-19/Ac45 and vah-20/PRR.

It localises to the membrane. Functionally, proton-conducting pore forming subunit of the V0 complex of vacuolar(H+)-ATPase (V-ATPase), a multisubunit enzyme composed of a peripheral complex (V1) that hydrolyzes ATP and a membrane integral complex (V0) that translocates protons. V-ATPase is responsible for acidifying and maintaining the pH of intracellular compartments and in some cell types, is targeted to the plasma membrane, where it is responsible for acidifying the extracellular environment. This chain is V-type proton ATPase 16 kDa proteolipid subunit c (12), found in Ascaris suum (Pig roundworm).